A 961-amino-acid polypeptide reads, in one-letter code: SH3 domain-binding protein 4 (961 aa).

Positions 55-114 constitute an SH3 1 domain; it reads GNAKEVIAIKDYCPNNFTTLKFSKGDHLYVLDTSGGEWWYAHNTTEMGYIPSSYVQPLNY. 5 positions are modified to phosphoserine: serine 131, serine 244, serine 249, serine 277, and serine 294. Residues 315 to 452 enclose the ZU5 domain; that stretch reads TNIVCKLDSS…LEPCMYLAIV (138 aa). Serine 635 carries the post-translational modification Phosphoserine. In terms of domain architecture, SH3 2 spans 652–722; that stretch reads SSLKFGKLLK…HTKNVLVVGK (71 aa).

As to quaternary structure, homodimer or homooligomer. Interacts with DNM2, EPS15, clathrin, the adapter protein complex 2/AP-2 and TFRC. Interacts with the Rag GTPases RRAGA, RRAGB, RRAGC and RRAGD; the interaction is most probably direct, preferentially occurs with their inactive GDP-bound form and is negatively regulated by amino acids. Post-translationally, phosphorylated upon EGF stimulation. Phosphorylation prevents interaction with DNM2.

Its subcellular location is the membrane. It localises to the clathrin-coated pit. The protein localises to the cytoplasmic vesicle. It is found in the clathrin-coated vesicle. The protein resides in the nucleus. In terms of biological role, may function in transferrin receptor internalization at the plasma membrane through a cargo-specific control of clathrin-mediated endocytosis. Alternatively, may act as a negative regulator of the amino acid-induced TOR signaling by inhibiting the formation of active Rag GTPase complexes. Preferentially binds inactive Rag GTPase complexes and prevents their interaction with the mTORC1 complex inhibiting its relocalization to lysosomes and its activation. Thereby, may indirectly regulate cell growth, proliferation and autophagy. The chain is SH3 domain-binding protein 4 (Sh3bp4) from Rattus norvegicus (Rat).